A 241-amino-acid chain; its full sequence is Ribonuclease P protein component 3 (241 aa).

It belongs to the eukaryotic/archaeal RNase P protein component 3 family. Consists of a catalytic RNA component and at least 4-5 protein subunits.

The protein localises to the cytoplasm. The catalysed reaction is Endonucleolytic cleavage of RNA, removing 5'-extranucleotides from tRNA precursor.. Functionally, part of ribonuclease P, a protein complex that generates mature tRNA molecules by cleaving their 5'-ends. The sequence is that of Ribonuclease P protein component 3 from Methanococcoides burtonii (strain DSM 6242 / NBRC 107633 / OCM 468 / ACE-M).